We begin with the raw amino-acid sequence, 171 residues long: UPF0763 protein Hac_0849 (171 aa).

This sequence belongs to the UPF0763 family.

This is UPF0763 protein Hac_0849 from Helicobacter acinonychis (strain Sheeba).